We begin with the raw amino-acid sequence, 669 residues long: Probable serine/threonine-protein kinase DDB_G0291918 (669 aa).

The Protein kinase domain maps to 13 to 360 (YNNIKELGRG…LKETLNHPFL (348 aa)). Residues 19 to 27 (LGRGVSGVV) and lysine 42 contribute to the ATP site. The Proton acceptor role is filled by aspartate 141. Low complexity predominate over residues 396-405 (QNQQQQQQQQ). Disordered stretches follow at residues 396-518 (QNQQ…APTF) and 530-550 (FPKL…MNWR). The span at 406–418 (KSFSTSSLPQVNH) shows a compositional bias: polar residues. Composition is skewed to low complexity over residues 419–449 (NNDT…NNNN) and 457–494 (QSNN…SSTD).

The protein belongs to the protein kinase superfamily. Ser/Thr protein kinase family.

The catalysed reaction is L-seryl-[protein] + ATP = O-phospho-L-seryl-[protein] + ADP + H(+). It carries out the reaction L-threonyl-[protein] + ATP = O-phospho-L-threonyl-[protein] + ADP + H(+). This is Probable serine/threonine-protein kinase DDB_G0291918 from Dictyostelium discoideum (Social amoeba).